The chain runs to 595 residues: RuBisCO large subunit-binding protein subunit beta, chloroplastic (595 aa).

Residues 1 to 49 (MASTFSATTSSCNLSSSAAISSFPLAAGKRNANKVVLPRKNRNVKVSAM) constitute a chloroplast transit peptide.

It belongs to the chaperonin (HSP60) family. As to quaternary structure, oligomer of probably six alpha and six beta subunits.

It localises to the plastid. The protein localises to the chloroplast. Its function is as follows. This protein binds RuBisCO small and large subunits and is implicated in the assembly of the enzyme oligomer. This Pisum sativum (Garden pea) protein is RuBisCO large subunit-binding protein subunit beta, chloroplastic.